The following is a 160-amino-acid chain: Cyclic pyranopterin monophosphate synthase (160 aa).

Substrate is bound by residues 77 to 79 and 114 to 115; these read LCH and ME. Residue Asp129 is part of the active site.

This sequence belongs to the MoaC family. As to quaternary structure, homohexamer; trimer of dimers.

It catalyses the reaction (8S)-3',8-cyclo-7,8-dihydroguanosine 5'-triphosphate = cyclic pyranopterin phosphate + diphosphate. The protein operates within cofactor biosynthesis; molybdopterin biosynthesis. Its function is as follows. Catalyzes the conversion of (8S)-3',8-cyclo-7,8-dihydroguanosine 5'-triphosphate to cyclic pyranopterin monophosphate (cPMP). The polypeptide is Cyclic pyranopterin monophosphate synthase (Alcanivorax borkumensis (strain ATCC 700651 / DSM 11573 / NCIMB 13689 / SK2)).